A 270-amino-acid chain; its full sequence is Protein MGF 110-1L (270 aa).

The signal sequence occupies residues 1-26; the sequence is MLGLQIFTLLSIPTLLYTYEIEPLER. The Extracellular segment spans residues 27–117; the sequence is TSTPPEKELG…HERHEADIRK (91 aa). The A repeat unit spans residues 27-146; it reads TSTPPEKELG…YIRKRSLQTV (120 aa). N-linked (GlcNAc...) asparagine; by host glycosylation is present at asparagine 75. A helical membrane pass occupies residues 118–138; sequence WQKLLTYGFYLAGCILAVNYI. Over 139-145 the chain is Cytoplasmic; the sequence is RKRSLQT. The chain crosses the membrane as a helical span at residues 146–166; it reads VMYLLVFLVISFLLSQLMLYG. A B repeat occupies 147 to 270; sequence MYLLVFLVIS…DNLMKKQDIM (124 aa). At 167–270 the chain is on the extracellular side; it reads ELEDKKHKIG…DNLMKKQDIM (104 aa).

Belongs to the asfivirus MGF 110 family.

The protein localises to the membrane. In terms of biological role, plays a role in virus cell tropism, and may be required for efficient virus replication in macrophages. In Ornithodoros (relapsing fever ticks), this protein is Protein MGF 110-1L.